The chain runs to 363 residues: Phospho-N-acetylmuramoyl-pentapeptide-transferase (363 aa).

10 consecutive transmembrane segments (helical) span residues 3-23 (QILF…PLLI), 48-68 (GTPT…YFLA), 83-103 (PTFS…VGFL), 121-141 (AKMI…LQFA), 159-179 (FGWT…ILAM), 192-212 (LATG…VWQF), 234-254 (PLDL…FLWW), 261-281 (IFMG…LAIC), 286-306 (LLMA…VIQV), and 340-360 (FWII…AGWA).

It belongs to the glycosyltransferase 4 family. MraY subfamily. The cofactor is Mg(2+).

It localises to the cell membrane. It carries out the reaction UDP-N-acetyl-alpha-D-muramoyl-L-alanyl-gamma-D-glutamyl-meso-2,6-diaminopimeloyl-D-alanyl-D-alanine + di-trans,octa-cis-undecaprenyl phosphate = di-trans,octa-cis-undecaprenyl diphospho-N-acetyl-alpha-D-muramoyl-L-alanyl-D-glutamyl-meso-2,6-diaminopimeloyl-D-alanyl-D-alanine + UMP. Its pathway is cell wall biogenesis; peptidoglycan biosynthesis. Functionally, catalyzes the initial step of the lipid cycle reactions in the biosynthesis of the cell wall peptidoglycan: transfers peptidoglycan precursor phospho-MurNAc-pentapeptide from UDP-MurNAc-pentapeptide onto the lipid carrier undecaprenyl phosphate, yielding undecaprenyl-pyrophosphoryl-MurNAc-pentapeptide, known as lipid I. This Streptomyces coelicolor (strain ATCC BAA-471 / A3(2) / M145) protein is Phospho-N-acetylmuramoyl-pentapeptide-transferase.